We begin with the raw amino-acid sequence, 164 residues long: FMN reductase (NADH) RutF (164 aa).

Belongs to the non-flavoprotein flavin reductase family. RutF subfamily.

The catalysed reaction is FMNH2 + NAD(+) = FMN + NADH + 2 H(+). In terms of biological role, catalyzes the reduction of FMN to FMNH2 which is used to reduce pyrimidine by RutA via the Rut pathway. The protein is FMN reductase (NADH) RutF of Klebsiella pneumoniae subsp. pneumoniae (strain ATCC 700721 / MGH 78578).